Reading from the N-terminus, the 305-residue chain is RNA-binding protein rnp-1 (305 aa).

The 70-residue stretch at 3-72 (SKLFVGNLPD…KVVNIKKSTS (70 aa)) folds into the RRM domain. The CCHC-type zinc-finger motif lies at 84–97 (CFRCQSDEHRTPQC). The disordered stretch occupies residues 284-305 (QQIQHQQATGSPAPVPAPPRLY). A compositionally biased stretch (pro residues) spans 296-305 (APVPAPPRLY).

In terms of tissue distribution, expressed throughout the germline.

Its function is as follows. RNA-binding protein that is required for the germ line to transition from spermatogenesis to oogenesis and allow for normal oocyte development. This is RNA-binding protein rnp-1 from Caenorhabditis elegans.